The sequence spans 459 residues: tRNA modification GTPase MnmE (459 aa).

Positions 23, 86, and 125 each coordinate (6S)-5-formyl-5,6,7,8-tetrahydrofolate. The 160-residue stretch at 221–380 (GLKTVIVGKP…LQDKIESMVY (160 aa)) folds into the TrmE-type G domain. Position 231 (N231) interacts with K(+). GTP contacts are provided by residues 231–236 (NVGKSS), 250–256 (TDIPGTT), and 275–278 (DTAG). S235 lines the Mg(2+) pocket. K(+)-binding residues include T250, I252, and T255. Mg(2+) is bound at residue T256. K459 is a (6S)-5-formyl-5,6,7,8-tetrahydrofolate binding site.

The protein belongs to the TRAFAC class TrmE-Era-EngA-EngB-Septin-like GTPase superfamily. TrmE GTPase family. As to quaternary structure, homodimer. Heterotetramer of two MnmE and two MnmG subunits. The cofactor is K(+).

It is found in the cytoplasm. Its function is as follows. Exhibits a very high intrinsic GTPase hydrolysis rate. Involved in the addition of a carboxymethylaminomethyl (cmnm) group at the wobble position (U34) of certain tRNAs, forming tRNA-cmnm(5)s(2)U34. In Clostridioides difficile (strain 630) (Peptoclostridium difficile), this protein is tRNA modification GTPase MnmE.